We begin with the raw amino-acid sequence, 453 residues long: Probable glycine dehydrogenase (decarboxylating) subunit 1 (453 aa).

The protein belongs to the GcvP family. N-terminal subunit subfamily. In terms of assembly, the glycine cleavage system is composed of four proteins: P, T, L and H. In this organism, the P 'protein' is a heterodimer of two subunits.

The enzyme catalyses N(6)-[(R)-lipoyl]-L-lysyl-[glycine-cleavage complex H protein] + glycine + H(+) = N(6)-[(R)-S(8)-aminomethyldihydrolipoyl]-L-lysyl-[glycine-cleavage complex H protein] + CO2. In terms of biological role, the glycine cleavage system catalyzes the degradation of glycine. The P protein binds the alpha-amino group of glycine through its pyridoxal phosphate cofactor; CO(2) is released and the remaining methylamine moiety is then transferred to the lipoamide cofactor of the H protein. This chain is Probable glycine dehydrogenase (decarboxylating) subunit 1, found in Methylococcus capsulatus (strain ATCC 33009 / NCIMB 11132 / Bath).